Reading from the N-terminus, the 201-residue chain is Small ribosomal subunit protein uS5 (201 aa).

Positions 1-28 (MAHQNEQRGGGDRGRGRGRGRDRDQERD) are disordered. The S5 DRBM domain occupies 31-94 (LVDKLVHINR…DEAKKNMIRV (64 aa)). Positions 173 to 201 (SVAAKRGLKVGDLVNRRDDGASSPEAIEA) are disordered.

The protein belongs to the universal ribosomal protein uS5 family. As to quaternary structure, part of the 30S ribosomal subunit. Contacts proteins S4 and S8.

In terms of biological role, with S4 and S12 plays an important role in translational accuracy. Its function is as follows. Located at the back of the 30S subunit body where it stabilizes the conformation of the head with respect to the body. In Maricaulis maris (strain MCS10) (Caulobacter maris), this protein is Small ribosomal subunit protein uS5.